A 139-amino-acid polypeptide reads, in one-letter code: Ribulose bisphosphate carboxylase small subunit (139 aa).

Belongs to the RuBisCO small chain family. In terms of assembly, heterohexadecamer of 8 large and 8 small subunits.

The protein localises to the plastid. The protein resides in the chloroplast. Functionally, ruBisCO catalyzes two reactions: the carboxylation of D-ribulose 1,5-bisphosphate, the primary event in carbon dioxide fixation, as well as the oxidative fragmentation of the pentose substrate in the photorespiration process. Both reactions occur simultaneously and in competition at the same active site. Although the small subunit is not catalytic it is essential for maximal activity. This Cylindrotheca sp. (strain N1) (Marine diatom) protein is Ribulose bisphosphate carboxylase small subunit.